A 298-amino-acid chain; its full sequence is Lipoyl synthase (298 aa).

Residues cysteine 40, cysteine 45, cysteine 51, cysteine 67, cysteine 71, cysteine 74, and serine 280 each contribute to the [4Fe-4S] cluster site. The Radical SAM core domain maps to 53–269; it reads AVRRTATFMI…KEIALSKGFS (217 aa).

This sequence belongs to the radical SAM superfamily. Lipoyl synthase family. The cofactor is [4Fe-4S] cluster.

It is found in the cytoplasm. The catalysed reaction is [[Fe-S] cluster scaffold protein carrying a second [4Fe-4S](2+) cluster] + N(6)-octanoyl-L-lysyl-[protein] + 2 oxidized [2Fe-2S]-[ferredoxin] + 2 S-adenosyl-L-methionine + 4 H(+) = [[Fe-S] cluster scaffold protein] + N(6)-[(R)-dihydrolipoyl]-L-lysyl-[protein] + 4 Fe(3+) + 2 hydrogen sulfide + 2 5'-deoxyadenosine + 2 L-methionine + 2 reduced [2Fe-2S]-[ferredoxin]. Its pathway is protein modification; protein lipoylation via endogenous pathway; protein N(6)-(lipoyl)lysine from octanoyl-[acyl-carrier-protein]. Functionally, catalyzes the radical-mediated insertion of two sulfur atoms into the C-6 and C-8 positions of the octanoyl moiety bound to the lipoyl domains of lipoate-dependent enzymes, thereby converting the octanoylated domains into lipoylated derivatives. The chain is Lipoyl synthase from Geobacillus thermodenitrificans (strain NG80-2).